The chain runs to 130 residues: MRQMNKTGIAHIYASQNNTIIHVTDPTGAETIAMVSGGMVVKNDRDQASPYAAMKAADMVSEALKEKEITDLIIKVRAPGGNKSKIPGPGAQAAIRALSRAGLKIVRIEEVTPIPHDGTKKKGGKRGRRV.

It belongs to the universal ribosomal protein uS11 family. As to quaternary structure, part of the 30S ribosomal subunit.

Functionally, located on the platform of the 30S subunit. The chain is Small ribosomal subunit protein uS11 from Thermoplasma acidophilum (strain ATCC 25905 / DSM 1728 / JCM 9062 / NBRC 15155 / AMRC-C165).